A 697-amino-acid polypeptide reads, in one-letter code: Serine/threonine-protein kinase tousled-like 2 (697 aa).

Disordered regions lie at residues 25-159 and 288-316; these read VAKG…SQSE and KLLI…SKSN. Over residues 31–44 the composition is skewed to polar residues; sequence HNESSNQSLCSVGS. Residues 46–61 are compositionally biased toward basic and acidic residues; that stretch reads SDKELETPEKKSNDQR. Residues 109-145 show a composition bias toward polar residues; that stretch reads SSPQHSLSNPPAAVQQGSPSSISSVNTDHSHTSTSHK. 2 coiled-coil regions span residues 265–294 and 336–373; these read AFQN…IKKK and KLRL…IHNE. Residues 388–666 form the Protein kinase domain; sequence YLLLHLLGRG…VHQLASDPYL (279 aa). ATP is bound by residues 394–402 and lysine 417; that span reads LGRGGFSEV. The active-site Proton acceptor is aspartate 518.

It belongs to the protein kinase superfamily. Ser/Thr protein kinase family. In terms of assembly, monomer. May form homodimers; homodimerization may enhance autophosphoylation and enzymatic activity. Heterodimer with TLK1. The cofactor is Mg(2+). In terms of processing, phosphorylated. Autophosphorylated; phosphorylation promotes the assembly of higher order oligomers and enzymatic activity.

Its subcellular location is the nucleus. The protein resides in the nucleoplasm. It localises to the cytoplasm. It is found in the perinuclear region. The protein localises to the cytoskeleton. The catalysed reaction is L-seryl-[protein] + ATP = O-phospho-L-seryl-[protein] + ADP + H(+). The enzyme catalyses L-threonyl-[protein] + ATP = O-phospho-L-threonyl-[protein] + ADP + H(+). Functionally, serine/threonine-protein kinase involved in the process of chromatin assembly and probably also DNA replication, transcription, repair, and chromosome segregation. Negative regulator of amino acid starvation-induced autophagy. This Danio rerio (Zebrafish) protein is Serine/threonine-protein kinase tousled-like 2.